Consider the following 91-residue polypeptide: MADYNLVGVIKVMPTDPDVNLDELEEKLKAVIPEKFGLAKVEREPIAFGLVALKFYVLGRDEEGYSYDEVADLFRQVENVESAEVETVSRI.

The protein belongs to the EF-1-beta/EF-1-delta family.

Promotes the exchange of GDP for GTP in EF-1-alpha/GDP, thus allowing the regeneration of EF-1-alpha/GTP that could then be used to form the ternary complex EF-1-alpha/GTP/AAtRNA. This chain is Elongation factor 1-beta, found in Thermococcus onnurineus (strain NA1).